Consider the following 181-residue polypeptide: Oligoribonuclease (181 aa).

Residues 8–171 (LIWVDLEMTG…DDIRESIAEL (164 aa)) enclose the Exonuclease domain. The active site involves Y129.

Belongs to the oligoribonuclease family.

The protein localises to the cytoplasm. Functionally, 3'-to-5' exoribonuclease specific for small oligoribonucleotides. This chain is Oligoribonuclease, found in Vibrio parahaemolyticus serotype O3:K6 (strain RIMD 2210633).